Consider the following 385-residue polypeptide: 8-amino-7-oxononanoate synthase (385 aa).

Arg21 contributes to the substrate binding site. 108–109 serves as a coordination point for pyridoxal 5'-phosphate; the sequence is GF. Residue His133 coordinates substrate. Positions 179, 207, and 233 each coordinate pyridoxal 5'-phosphate. Lys236 carries the post-translational modification N6-(pyridoxal phosphate)lysine. Thr352 serves as a coordination point for substrate.

It belongs to the class-II pyridoxal-phosphate-dependent aminotransferase family. BioF subfamily. In terms of assembly, homodimer. Requires pyridoxal 5'-phosphate as cofactor.

It catalyses the reaction 6-carboxyhexanoyl-[ACP] + L-alanine + H(+) = (8S)-8-amino-7-oxononanoate + holo-[ACP] + CO2. The protein operates within cofactor biosynthesis; biotin biosynthesis. Catalyzes the decarboxylative condensation of pimeloyl-[acyl-carrier protein] and L-alanine to produce 8-amino-7-oxononanoate (AON), [acyl-carrier protein], and carbon dioxide. This is 8-amino-7-oxononanoate synthase from Salmonella newport (strain SL254).